The sequence spans 617 residues: Protein fem-1 homolog C (617 aa).

ANK repeat units lie at residues 2–31 (DLKTAVFNAARDGKLRLLSKLLENKAKDDV), 40–70 (NGATPLLMAARYGHLDMVDYLLDQCSASVEI), 82–111 (EGAPPLWAASAAGHLKVVRSLLVHGASVNN), 115–144 (TNSTPLRAACFDGHLEIVKYLVEHKADLEV), 148–177 (HGHTCLMISCYKGHKEIAQFLLEKGADVNR), 181–210 (KGNTALHDCAESGSLEIMQMLLKYGARMEK), and 213–242 (YGMTPLLSASVTGHTNIVDFLTQNPQTSKN). 2 TPR repeats span residues 245-279 (INALELLGATFVDKKRDLLGALKYWKRAMDMRHSD) and 338-371 (SYYIRYRGAVYADSGNFKRCINLWKYALDMQQNN). ANK repeat units follow at residues 481–523 (NNFS…DVNV) and 527–556 (EQNSPLHVAALNNHPDIMNLLVKSGAHFDS).

Belongs to the fem-1 family. In terms of assembly, component of a CRL2 E3 ubiquitin-protein ligase complex, also named ECS (Elongin BC-CUL2/5-SOCS-box protein) complex.

It participates in protein modification; protein ubiquitination. Its function is as follows. Substrate-recognition component of a Cul2-RING (CRL2) E3 ubiquitin-protein ligase complex of the DesCEND (destruction via C-end degrons) pathway, which recognizes a C-degron located at the extreme C terminus of target proteins, leading to their ubiquitination and degradation. The C-degron recognized by the DesCEND pathway is usually a motif of less than ten residues and can be present in full-length proteins, truncated proteins or proteolytically cleaved forms. The CRL2(FEM1C) complex specifically recognizes proteins with an arginine at the C-terminus: recognizes and binds proteins ending with -Lys/Arg-Xaa-Arg and -Lys/Arg-Xaa-Xaa-Arg C-degrons, leading to their ubiquitination and degradation. The chain is Protein fem-1 homolog C from Xenopus laevis (African clawed frog).